A 367-amino-acid polypeptide reads, in one-letter code: 4-hydroxy-3-methylbut-2-en-1-yl diphosphate synthase (flavodoxin) (367 aa).

The [4Fe-4S] cluster site is built by Cys-270, Cys-273, Cys-305, and Glu-312.

It belongs to the IspG family. [4Fe-4S] cluster is required as a cofactor.

It catalyses the reaction (2E)-4-hydroxy-3-methylbut-2-enyl diphosphate + oxidized [flavodoxin] + H2O + 2 H(+) = 2-C-methyl-D-erythritol 2,4-cyclic diphosphate + reduced [flavodoxin]. Its pathway is isoprenoid biosynthesis; isopentenyl diphosphate biosynthesis via DXP pathway; isopentenyl diphosphate from 1-deoxy-D-xylulose 5-phosphate: step 5/6. In terms of biological role, converts 2C-methyl-D-erythritol 2,4-cyclodiphosphate (ME-2,4cPP) into 1-hydroxy-2-methyl-2-(E)-butenyl 4-diphosphate. The polypeptide is 4-hydroxy-3-methylbut-2-en-1-yl diphosphate synthase (flavodoxin) (Buchnera aphidicola subsp. Schizaphis graminum (strain Sg)).